The chain runs to 239 residues: Ribonuclease 3 (239 aa).

An RNase III domain is found at Y18 to G141. Position 54 (E54) interacts with Mg(2+). The active site involves D58. Residues S127 and E130 each contribute to the Mg(2+) site. The active site involves E130. Positions D168 to E237 constitute a DRBM domain.

Belongs to the ribonuclease III family. Homodimer. It depends on Mg(2+) as a cofactor.

It is found in the cytoplasm. It catalyses the reaction Endonucleolytic cleavage to 5'-phosphomonoester.. Digests double-stranded RNA. Involved in the processing of primary rRNA transcript to yield the immediate precursors to the large and small rRNAs (23S and 16S). Processes some mRNAs, and tRNAs when they are encoded in the rRNA operon. Processes pre-crRNA and tracrRNA of type II CRISPR loci if present in the organism. The chain is Ribonuclease 3 from Helicobacter pylori (strain J99 / ATCC 700824) (Campylobacter pylori J99).